The sequence spans 544 residues: NADP-dependent malic enzyme (544 aa).

A disordered region spans residues 1-22 (MQNKPSFILRNPSANKGTGFNN). A compositionally biased stretch (polar residues) spans 12–21 (PSANKGTGFN). Tyr-92 acts as the Proton donor in catalysis. Arg-145 provides a ligand contact to NAD(+). Lys-163 functions as the Proton acceptor in the catalytic mechanism. Residues Glu-234, Asp-235, and Asp-258 each coordinate a divalent metal cation. Asp-258 serves as a coordination point for NAD(+). 287–303 (VFLGAGSAGIGVADCIM) contacts NADP(+). Asn-400 is an NAD(+) binding site.

The protein belongs to the malic enzymes family. As to quaternary structure, homotetramer. Requires Mg(2+) as cofactor. Mn(2+) is required as a cofactor. Expressed in the fruiting body.

The protein localises to the cytoplasm. The enzyme catalyses (S)-malate + NADP(+) = pyruvate + CO2 + NADPH. It carries out the reaction oxaloacetate + H(+) = pyruvate + CO2. This is NADP-dependent malic enzyme (malA) from Dictyostelium discoideum (Social amoeba).